A 270-amino-acid chain; its full sequence is uncharacterized protein (270 aa).

Positions 1–22 (MEYIKKLLCTMSVLLLIIFIGG) are cleaved as a signal peptide. Cysteine 23 is lipidated: N-palmitoyl cysteine. Cysteine 23 carries S-diacylglycerol cysteine lipidation.

Belongs to the staphylococcal tandem lipoprotein family.

The protein localises to the cell membrane. This is an uncharacterized protein from Staphylococcus aureus (strain bovine RF122 / ET3-1).